Reading from the N-terminus, the 351-residue chain is uncharacterized protein (351 aa).

6 residues coordinate Zn(2+): His-23, His-25, Lys-151, His-184, His-212, and Asp-270. Residue Lys-151 is modified to N6-carboxylysine.

This sequence belongs to the metallo-dependent hydrolases superfamily. Phosphotriesterase family. It depends on Zn(2+) as a cofactor.

This is an uncharacterized protein from Mycoplasma pneumoniae (strain ATCC 29342 / M129 / Subtype 1) (Mycoplasmoides pneumoniae).